The sequence spans 194 residues: NADH-quinone oxidoreductase subunit B (194 aa).

Over residues 1-11 the composition is skewed to polar residues; it reads MGMSQNNSTLV. The interval 1-22 is disordered; sequence MGMSQNNSTLVAPQPKGIIDPA. 4 residues coordinate [4Fe-4S] cluster: C72, C73, C138, and C168.

This sequence belongs to the complex I 20 kDa subunit family. As to quaternary structure, NDH-1 is composed of 14 different subunits. Subunits NuoB, C, D, E, F, and G constitute the peripheral sector of the complex. The cofactor is [4Fe-4S] cluster.

The protein localises to the cell inner membrane. It carries out the reaction a quinone + NADH + 5 H(+)(in) = a quinol + NAD(+) + 4 H(+)(out). Its function is as follows. NDH-1 shuttles electrons from NADH, via FMN and iron-sulfur (Fe-S) centers, to quinones in the respiratory chain. The immediate electron acceptor for the enzyme in this species is believed to be ubiquinone. Couples the redox reaction to proton translocation (for every two electrons transferred, four hydrogen ions are translocated across the cytoplasmic membrane), and thus conserves the redox energy in a proton gradient. This chain is NADH-quinone oxidoreductase subunit B, found in Agrobacterium fabrum (strain C58 / ATCC 33970) (Agrobacterium tumefaciens (strain C58)).